The primary structure comprises 186 residues: Translation initiation factor IF-3 (186 aa).

Belongs to the IF-3 family. Monomer.

It localises to the cytoplasm. Its function is as follows. IF-3 binds to the 30S ribosomal subunit and shifts the equilibrium between 70S ribosomes and their 50S and 30S subunits in favor of the free subunits, thus enhancing the availability of 30S subunits on which protein synthesis initiation begins. This is Translation initiation factor IF-3 from Chlamydia caviae (strain ATCC VR-813 / DSM 19441 / 03DC25 / GPIC) (Chlamydophila caviae).